The sequence spans 417 residues: D-galactonate dehydratase family member SeV_A0456 (417 aa).

Q43 and H127 together coordinate substrate. Residue Y158 is the Proton donor/acceptor of the active site. D223 provides a ligand contact to Mg(2+). The Proton donor/acceptor role is filled by H225. Positions 249 and 275 each coordinate Mg(2+). Substrate-binding residues include E275, R296, H325, D329, and E352.

This sequence belongs to the mandelate racemase/muconate lactonizing enzyme family. GalD subfamily. Mg(2+) serves as cofactor.

It catalyses the reaction D-gluconate = 2-dehydro-3-deoxy-D-gluconate + H2O. Functionally, has low D-gluconate dehydratase activity (in vitro), suggesting that it has no significant role in D-gluconate degradation in vivo. Has no detectable activity with a panel of 70 other acid sugars (in vitro). The chain is D-galactonate dehydratase family member SeV_A0456 from Salmonella virchow (strain SL491).